The following is a 360-amino-acid chain: Nicotinate-nucleotide--dimethylbenzimidazole phosphoribosyltransferase (360 aa).

Glu327 acts as the Proton acceptor in catalysis.

Belongs to the CobT family.

It carries out the reaction 5,6-dimethylbenzimidazole + nicotinate beta-D-ribonucleotide = alpha-ribazole 5'-phosphate + nicotinate + H(+). It functions in the pathway nucleoside biosynthesis; alpha-ribazole biosynthesis; alpha-ribazole from 5,6-dimethylbenzimidazole: step 1/2. Catalyzes the synthesis of alpha-ribazole-5'-phosphate from nicotinate mononucleotide (NAMN) and 5,6-dimethylbenzimidazole (DMB). This is Nicotinate-nucleotide--dimethylbenzimidazole phosphoribosyltransferase from Shewanella baltica (strain OS223).